The chain runs to 253 residues: Short chain dehydrogenase ple7 (253 aa).

Residues 5 to 25 (IVIVTGASHGIGLATVNLLLA) form a helical membrane-spanning segment. The NADP(+) site is built by V8, R116, Y148, K152, and N184. Y148 serves as the catalytic Proton acceptor. The active-site Lowers pKa of active site Tyr is K152. N-linked (GlcNAc...) asparagine glycosylation is present at N187.

It belongs to the short-chain dehydrogenases/reductases (SDR) family.

The protein resides in the membrane. The protein operates within secondary metabolite biosynthesis; terpenoid biosynthesis. Its function is as follows. Short chain dehydrogenase; part of the gene cluster that mediates the biosynthesis of pleuromutilin, a tricyclic diterpene showing antibacterial properties. The geranylgeranyl diphosphate (GGPP) synthase ple4 catalyzes the first step in pleuromutilin biosynthesis. GGPP is then substrate of the premutilin synthase (PS) ple3 to yield premutilin. Premutilin synthase is a bifunctional enzyme composed of the fusion of a class II diterpene cyclase (DTC) and a class I diterpene synthase (DTS), with the corresponding domains and active sites containing characteristic aspartate-rich motifs. GGPP is first converted to mutildienyl-diphosphate (MPP) at the class II DTC site. MPP is subsequently further cyclized at the class I DTS site, followed by a 1,5-hydride shift and addition of water prior to terminating deprotonation, to yield premutilin. The cytochrome P450 monooxygenases ple5 and ple6 hydroxylate premutilin at C-11 and C-3, respectively, producing 11-hydroxypremutilin and 3-hydroxypremutilin. The combination of the actions of both ple5 and ple6 leads to the production of 3,11-dihydroxypremutilin. The short chain dehydrogenase ple7 further converts 3,11-dihydroxypremutilin into mutilin. The acetyltransferase ple2 then acetylates mutilin to produce 14-O-acetylmutilin. Finally, the cytochrome P450 monooxygenase ple1 catalyzes hydroxylation on the alpha position of the acetyl side chain of 14-O-acetylmutilin to yield pleuromutilin. The sequence is that of Short chain dehydrogenase ple7 from Rhodocybe pseudopiperita (Clitopilus pseudopiperitus).